Reading from the N-terminus, the 140-residue chain is Small ribosomal subunit protein uS8c (140 aa).

The protein belongs to the universal ribosomal protein uS8 family. In terms of assembly, part of the 30S ribosomal subunit.

It localises to the plastid. Its subcellular location is the chloroplast. Functionally, one of the primary rRNA binding proteins, it binds directly to 16S rRNA central domain where it helps coordinate assembly of the platform of the 30S subunit. This chain is Small ribosomal subunit protein uS8c (rps8), found in Euglena gracilis.